The sequence spans 234 residues: Glucosamine-6-phosphate deaminase (234 aa).

The Proton acceptor; for enolization step role is filled by D62. N128 serves as the catalytic For ring-opening step. The Proton acceptor; for ring-opening step role is filled by H130. The active-site For ring-opening step is E135.

The protein belongs to the glucosamine/galactosamine-6-phosphate isomerase family. NagB subfamily.

The catalysed reaction is alpha-D-glucosamine 6-phosphate + H2O = beta-D-fructose 6-phosphate + NH4(+). It participates in amino-sugar metabolism; N-acetylneuraminate degradation; D-fructose 6-phosphate from N-acetylneuraminate: step 5/5. Its function is as follows. Catalyzes the reversible isomerization-deamination of glucosamine 6-phosphate (GlcN6P) to form fructose 6-phosphate (Fru6P) and ammonium ion. The sequence is that of Glucosamine-6-phosphate deaminase from Lactobacillus delbrueckii subsp. bulgaricus (strain ATCC 11842 / DSM 20081 / BCRC 10696 / JCM 1002 / NBRC 13953 / NCIMB 11778 / NCTC 12712 / WDCM 00102 / Lb 14).